We begin with the raw amino-acid sequence, 469 residues long: Glutamate--tRNA ligase (469 aa).

A 'HIGH' region motif is present at residues 9–19 (PSPTGFLHVGG). Zn(2+) is bound by residues Cys98, Cys100, Cys125, and Asp127. The 'KMSKS' region motif lies at 236-240 (KLSKR). ATP is bound at residue Lys239.

This sequence belongs to the class-I aminoacyl-tRNA synthetase family. Glutamate--tRNA ligase type 1 subfamily. As to quaternary structure, monomer. Zn(2+) is required as a cofactor.

It localises to the cytoplasm. It catalyses the reaction tRNA(Glu) + L-glutamate + ATP = L-glutamyl-tRNA(Glu) + AMP + diphosphate. Functionally, catalyzes the attachment of glutamate to tRNA(Glu) in a two-step reaction: glutamate is first activated by ATP to form Glu-AMP and then transferred to the acceptor end of tRNA(Glu). The polypeptide is Glutamate--tRNA ligase (Shewanella halifaxensis (strain HAW-EB4)).